We begin with the raw amino-acid sequence, 88 residues long: Small ribosomal subunit protein uS19 (88 aa).

The protein belongs to the universal ribosomal protein uS19 family.

Its function is as follows. Protein S19 forms a complex with S13 that binds strongly to the 16S ribosomal RNA. This chain is Small ribosomal subunit protein uS19 (rpsS), found in Mycoplasma capricolum subsp. capricolum (strain California kid / ATCC 27343 / NCTC 10154).